We begin with the raw amino-acid sequence, 169 residues long: Photosystem I assembly protein Ycf3 (169 aa).

TPR repeat units follow at residues Ala-35–Pro-68, Ser-72–Leu-105, and Gly-120–Asn-153.

This sequence belongs to the Ycf3 family.

It is found in the plastid. It localises to the chloroplast thylakoid membrane. Essential for the assembly of the photosystem I (PSI) complex. May act as a chaperone-like factor to guide the assembly of the PSI subunits. This chain is Photosystem I assembly protein Ycf3, found in Staurastrum punctulatum (Green alga).